The chain runs to 1021 residues: Caspase recruitment domain-containing protein 10 (1021 aa).

The tract at residues methionine 1–glutamate 24 is disordered. Serine 18 is subject to Phosphoserine. The 93-residue stretch at glutamate 23–glutamate 115 folds into the CARD domain. The stretch at threonine 138–glycine 450 forms a coiled coil. 3 disordered regions span residues glutamate 475–isoleucine 544, serine 597–glycine 616, and leucine 790–alanine 809. 2 stretches are compositionally biased toward basic and acidic residues: residues histidine 495 to asparagine 508 and arginine 525 to lysine 535.

As to quaternary structure, CARD10 and BCL10 bind to each other by CARD-CARD interaction. They both participate in a complex with MALT1, where MALT1 binds to BCL10. Interacts with TMEM43; this interaction is essential for EGFR-mediated NF-kappa-B activation. Highly expressed in kidney, heart followed by brain, lung, liver, skeletal muscle and testis.

In terms of biological role, scaffold protein that plays an important role in mediating the activation of NF-kappa-B via BCL10 or EGFR. The sequence is that of Caspase recruitment domain-containing protein 10 (Card10) from Mus musculus (Mouse).